A 372-amino-acid chain; its full sequence is Alanine dehydrogenase (372 aa).

The substrate site is built by arginine 15 and lysine 75. The Proton donor/acceptor role is filled by histidine 96. NAD(+) is bound by residues serine 134, 178-179 (TA), aspartate 198, serine 220, 239-240 (VL), 266-269 (IAID), arginine 279, and 298-301 (VANM). Aspartate 269 (proton donor/acceptor) is an active-site residue.

The protein belongs to the AlaDH/PNT family. In terms of assembly, homohexamer.

The protein resides in the cytoplasm. The catalysed reaction is L-alanine + NAD(+) + H2O = pyruvate + NH4(+) + NADH + H(+). The protein operates within amino-acid degradation; L-alanine degradation via dehydrogenase pathway; NH(3) and pyruvate from L-alanine: step 1/1. Its function is as follows. Catalyzes the reversible reductive amination of pyruvate to L-alanine. A key factor in the assimilation of L-alanine as an energy source via the tricarboxylic acid cycle during sporulation. This chain is Alanine dehydrogenase (ald), found in Geobacillus stearothermophilus (Bacillus stearothermophilus).